The primary structure comprises 235 residues: Phosphoribosylaminoimidazole-succinocarboxamide synthase (235 aa).

It belongs to the SAICAR synthetase family.

The catalysed reaction is 5-amino-1-(5-phospho-D-ribosyl)imidazole-4-carboxylate + L-aspartate + ATP = (2S)-2-[5-amino-1-(5-phospho-beta-D-ribosyl)imidazole-4-carboxamido]succinate + ADP + phosphate + 2 H(+). Its pathway is purine metabolism; IMP biosynthesis via de novo pathway; 5-amino-1-(5-phospho-D-ribosyl)imidazole-4-carboxamide from 5-amino-1-(5-phospho-D-ribosyl)imidazole-4-carboxylate: step 1/2. The sequence is that of Phosphoribosylaminoimidazole-succinocarboxamide synthase from Streptococcus sanguinis (strain SK36).